A 359-amino-acid polypeptide reads, in one-letter code: Protein disulfide-isomerase tigA (359 aa).

The first 19 residues, 1–19, serve as a signal peptide directing secretion; sequence MVRLSNLVSCLGLASAVTA. Thioredoxin domains are found at residues 20–129 and 131–250; these read AVVD…EKTG and KPRG…EKTG. Active-site nucleophile residues include Cys-49, Cys-52, Cys-169, and Cys-172. Disulfide bonds link Cys-49–Cys-52 and Cys-169–Cys-172. The Prevents secretion from ER signature appears at 356–359; sequence KDEL.

This sequence belongs to the protein disulfide isomerase family.

The protein resides in the endoplasmic reticulum lumen. The enzyme catalyses Catalyzes the rearrangement of -S-S- bonds in proteins.. This Aspergillus niger protein is Protein disulfide-isomerase tigA (tigA).